Here is a 797-residue protein sequence, read N- to C-terminus: Methionine--tRNA ligase, cytoplasmic (797 aa).

The 'HIGH' region signature appears at 26 to 36 (PYVNNVPHLGN). Residues 348-352 (KFSKS) carry the 'KMSKS' region motif. An ATP-binding site is contributed by K351. The disordered stretch occupies residues 601-634 (DQLNKTKLSDAKKQKASSKGGGKPKPQPAADREI). The 104-residue stretch at 635–738 (TMARLDIRVG…KTANIGERVT (104 aa)) folds into the tRNA-binding domain.

It belongs to the class-I aminoacyl-tRNA synthetase family.

It localises to the cytoplasm. The protein resides in the cytosol. The enzyme catalyses tRNA(Met) + L-methionine + ATP = L-methionyl-tRNA(Met) + AMP + diphosphate. The chain is Methionine--tRNA ligase, cytoplasmic from Arabidopsis thaliana (Mouse-ear cress).